Consider the following 212-residue polypeptide: Pyridoxine/pyridoxamine 5'-phosphate oxidase (212 aa).

FMN-binding positions include 59-64, 74-75, Lys81, and Gln103; these read RMVLMK and YS. A substrate-binding site is contributed by Lys64. Residues Tyr121 and Arg125 each contribute to the substrate site. FMN is bound by residues 138–139 and Trp183; that span reads QS. 189 to 191 is a substrate binding site; that stretch reads RLH. Arg193 contacts FMN.

Belongs to the pyridoxamine 5'-phosphate oxidase family. In terms of assembly, homodimer. The cofactor is FMN.

It catalyses the reaction pyridoxamine 5'-phosphate + O2 + H2O = pyridoxal 5'-phosphate + H2O2 + NH4(+). The catalysed reaction is pyridoxine 5'-phosphate + O2 = pyridoxal 5'-phosphate + H2O2. Its pathway is cofactor metabolism; pyridoxal 5'-phosphate salvage; pyridoxal 5'-phosphate from pyridoxamine 5'-phosphate: step 1/1. The protein operates within cofactor metabolism; pyridoxal 5'-phosphate salvage; pyridoxal 5'-phosphate from pyridoxine 5'-phosphate: step 1/1. Functionally, catalyzes the oxidation of either pyridoxine 5'-phosphate (PNP) or pyridoxamine 5'-phosphate (PMP) into pyridoxal 5'-phosphate (PLP). This chain is Pyridoxine/pyridoxamine 5'-phosphate oxidase, found in Rhodopseudomonas palustris (strain HaA2).